The sequence spans 341 residues: ATPase GET3 (341 aa).

An ATP-binding site is contributed by Lys34–Thr41. Residue Asp63 is part of the active site. The ATP site is built by Glu245 and Asn272. Zn(2+) is bound by residues Cys283 and Cys286.

Belongs to the arsA ATPase family. As to quaternary structure, homodimer.

Its subcellular location is the cytoplasm. It is found in the endoplasmic reticulum. Its function is as follows. ATPase required for the post-translational delivery of tail-anchored (TA) proteins to the endoplasmic reticulum. Recognizes and selectively binds the transmembrane domain of TA proteins in the cytosol. This complex then targets to the endoplasmic reticulum by membrane-bound receptors, where the tail-anchored protein is released for insertion. This process is regulated by ATP binding and hydrolysis. ATP binding drives the homodimer towards the closed dimer state, facilitating recognition of newly synthesized TA membrane proteins. ATP hydrolysis is required for insertion. Subsequently, the homodimer reverts towards the open dimer state, lowering its affinity for the membrane-bound receptor, and returning it to the cytosol to initiate a new round of targeting. The chain is ATPase GET3 from Paracoccidioides brasiliensis (strain Pb18).